Here is a 230-residue protein sequence, read N- to C-terminus: MKDLPIIALDFESKEKVNQFLDLFDESLFVKVGMELFYQEGPQLINEIKERGHDVFLDLKLHDIPNTVGKAMEGLAKLNVDLVNVHAAGGVKMMSEAIKGLRKHNQHTKIIAVTQLTSTTEDMLRHEQNIQTSIEEAVLNYAKLANAAGLDGVVCSPLESRMLTEKLGTSFLKVTPGIRPKGASQDDQHRITTPEEARQLGSTHIVVGRPITQSDNPVESYHKIKESWLV.

Substrate-binding positions include aspartate 10, lysine 31, 58–67 (DLKLHDIPNT), threonine 117, arginine 179, glutamine 188, glycine 208, and arginine 209. The Proton donor role is filled by lysine 60.

It belongs to the OMP decarboxylase family. Type 1 subfamily. Homodimer.

The catalysed reaction is orotidine 5'-phosphate + H(+) = UMP + CO2. The protein operates within pyrimidine metabolism; UMP biosynthesis via de novo pathway; UMP from orotate: step 2/2. Catalyzes the decarboxylation of orotidine 5'-monophosphate (OMP) to uridine 5'-monophosphate (UMP). In Staphylococcus aureus (strain Mu3 / ATCC 700698), this protein is Orotidine 5'-phosphate decarboxylase.